We begin with the raw amino-acid sequence, 263 residues long: MARGPKKHLKRVAAPKHWMLDKLTGVFAPRPSTGPHKLRECLPLIVFLRNRLKYALTGDEVKKICMQRFIKIDGKVRVDVTYPAGFMDVISIEKTGEHFRLVYDTKGRFAVHRITVEEAKYKLCKVRKITVGVKGIPHLVTHDARTIRYPDPVIKVNDTVQIDLGTGKIINFIKFDTGNLCMVIGGANLGRVGVITNRERHPGSFDVVHVKDANGNSFATRLSNIFVIGNGNKPWISLPRGKGIRLTVAEERDKRLATKQSSG.

The region spanning 42–104 (LPLIVFLRNR…TGEHFRLVYD (63 aa)) is the S4 RNA-binding domain.

This sequence belongs to the eukaryotic ribosomal protein eS4 family.

The polypeptide is Small ribosomal subunit protein eS4, Y isoform 1 (RPS4Y1) (Homo sapiens (Human)).